Reading from the N-terminus, the 151-residue chain is Large ribosomal subunit protein bL28c (151 aa).

The N-terminal 74 residues, 1–74 (MATMVAGISL…PFKPSLQPVA (74 aa)), are a transit peptide targeting the chloroplast.

This sequence belongs to the bacterial ribosomal protein bL28 family. In terms of assembly, part of the 50S ribosomal subunit.

It is found in the plastid. It localises to the chloroplast. The protein is Large ribosomal subunit protein bL28c (RPL28) of Nicotiana tabacum (Common tobacco).